Reading from the N-terminus, the 519-residue chain is NADH-quinone oxidoreductase subunit N (519 aa).

14 consecutive transmembrane segments (helical) span residues 22–42 (LLPMLIVFGVACAGVLVEAFV), 53–73 (VLALGGLVAALIAVVSNTGLP), 87–107 (PTLFIQGTILALSIGALLLIA), 141–161 (TEVFPLAMFAVGGMMLFPAAN), 163–183 (LITAFVALEVLSLPLYLLAGM), 198–218 (YFLLGAFSSAFFVYGLALVYG), 242–262 (IIVGLALIGISLLFKLSGVPF), 287–307 (VAAFGALLRVFFVAFGGLAWD), 310–330 (PVIWGVAIATMVVGAILGITQ), 336–356 (LLAYSSIAHAGFVLTAFAATT), 363–383 (VLFYLVAYGFMTIGAFAIVIL), 406–426 (LVAGIFALFLLAMAGLPPTSG), 442–461 (AGPLVIVGVLASAVTAYYYL), and 483–503 (GALASAAIALGVIVTVVLGIV).

The protein belongs to the complex I subunit 2 family. NDH-1 is composed of 14 different subunits. Subunits NuoA, H, J, K, L, M, N constitute the membrane sector of the complex.

Its subcellular location is the cell membrane. It carries out the reaction a quinone + NADH + 5 H(+)(in) = a quinol + NAD(+) + 4 H(+)(out). Its function is as follows. NDH-1 shuttles electrons from NADH, via FMN and iron-sulfur (Fe-S) centers, to quinones in the respiratory chain. The immediate electron acceptor for the enzyme in this species is believed to be a menaquinone. Couples the redox reaction to proton translocation (for every two electrons transferred, four hydrogen ions are translocated across the cytoplasmic membrane), and thus conserves the redox energy in a proton gradient. The polypeptide is NADH-quinone oxidoreductase subunit N (Acidothermus cellulolyticus (strain ATCC 43068 / DSM 8971 / 11B)).